Here is a 217-residue protein sequence, read N- to C-terminus: MKFFVDTADVKEIRELNDLGLVDGVTTNPSLILKSGRDIIEVTKEICNIVKGPVSAEVAATEYEQMMKEAAVIARIADNICIKLPVTLDGLKACKALTSEGHKVNMTLCFSANQALLAAKAGATFISPFIGRLDDTGINGMELIAEIRTIYDNYDFRTEILAASVRTVNHVKEAALIGADVVTAPPATLKALVKHPLTDKGLETFLADWAKTGQKIA.

The Schiff-base intermediate with substrate role is filled by Lys83.

Belongs to the transaldolase family. Type 3B subfamily.

It is found in the cytoplasm. The enzyme catalyses D-sedoheptulose 7-phosphate + D-glyceraldehyde 3-phosphate = D-erythrose 4-phosphate + beta-D-fructose 6-phosphate. Its pathway is carbohydrate degradation; pentose phosphate pathway; D-glyceraldehyde 3-phosphate and beta-D-fructose 6-phosphate from D-ribose 5-phosphate and D-xylulose 5-phosphate (non-oxidative stage): step 2/3. Transaldolase is important for the balance of metabolites in the pentose-phosphate pathway. The polypeptide is Probable transaldolase (Brucella abortus (strain S19)).